Here is a 277-residue protein sequence, read N- to C-terminus: Leucine-rich repeat-containing protein 10 (277 aa).

LRR repeat units lie at residues 53–74, 76–97, 99–120, 122–143, 145–167, 168–189, and 191–212; these read ELVK…LGQL, NLQI…VCTL, QLCI…LSLL, NLRT…VCEL, LLKT…RRLQ, ELRT…LLHM, and FLEV…AHLS.

It localises to the nucleus. In terms of biological role, may play important roles in cardiac development and/or cardiac function. This chain is Leucine-rich repeat-containing protein 10 (LRRC10), found in Homo sapiens (Human).